Here is a 428-residue protein sequence, read N- to C-terminus: MSAIVDIFAREILDSRGNPTVECDVLLESGVMGRAAVPSGASTGQKEALELRDGDKSRYSGKGVLKAVEHVNNQIAQALIGIDANEQSYIDQIMIELDGTENKGNLGANATLAVSMAVARAAAEDSGLPLYRYLGGAGPMSLPVPMMNVINGGEHANNSLNIQEFMIMPVGAKSFREALRCGAEIFHALKKLCDSKGFPTTVGDEGGFAPNLNSHKEALQLMVEAAEAAGYKAGEDVLFALDCASSEFYKDGKYHLEAEGRSYTNAEFAEYLEGLVNEFPIISIEDGMDENDWEGWKLLTEKLGKKVQLVGDDLFVTNPKILAEGIEKGVANALLVKVNQIGTLSETLKAVDLAKCNRYASVMSHRSGETEDSTIADLAVATNCMQIKTGSLSRSDRMAKYNQLLRIEEELAEAAYYPGKAAFYQLGK.

Residue Q163 participates in (2R)-2-phosphoglycerate binding. The active-site Proton donor is E205. The Mg(2+) site is built by D242, E285, and D312. K337, R366, S367, and K388 together coordinate (2R)-2-phosphoglycerate. Residue K337 is the Proton acceptor of the active site.

Belongs to the enolase family. Requires Mg(2+) as cofactor.

Its subcellular location is the cytoplasm. It localises to the secreted. The protein localises to the cell surface. It catalyses the reaction (2R)-2-phosphoglycerate = phosphoenolpyruvate + H2O. It participates in carbohydrate degradation; glycolysis; pyruvate from D-glyceraldehyde 3-phosphate: step 4/5. Functionally, catalyzes the reversible conversion of 2-phosphoglycerate (2-PG) into phosphoenolpyruvate (PEP). It is essential for the degradation of carbohydrates via glycolysis. The polypeptide is Enolase (Neisseria gonorrhoeae (strain ATCC 700825 / FA 1090)).